Reading from the N-terminus, the 554-residue chain is GPI alpha-1,2-mannosyltransferase 3 (554 aa).

N26 carries an N-linked (GlcNAc...) asparagine glycan. The next 9 membrane-spanning stretches (helical) occupy residues L63–V83, V136–V156, L192–G212, L224–F244, D255–I275, G315–P335, I340–F360, F362–K382, and P387–H407. Residue N427 is glycosylated (N-linked (GlcNAc...) asparagine).

Belongs to the glycosyltransferase 22 family. PIGB subfamily.

It localises to the endoplasmic reticulum membrane. It participates in glycolipid biosynthesis; glycosylphosphatidylinositol-anchor biosynthesis. In terms of biological role, alpha-1,2-mannosyltransferase that catalyzes the transfer of the third mannose, via an alpha-1,2 bond, from a dolichol-phosphate-mannose (Dol-P-Man) to an alpha-D-Man-(1-&gt;6)-2-PEtn-alpha-D-Man-(1-&gt;4)-alpha-D-GlcN-(1-&gt;6)-(1-radyl,2-acyl-sn-glycero-3-phospho)-2-acyl-inositol intermediate to generate an alpha-D-Man-(1-&gt;2)-alpha-D-Man-(1-&gt;6)-2-PEtn-alpha-D-Man-(1-&gt;4)-alpha-D-GlcN-(1-&gt;6)-(1-radyl,2-acyl-sn-glycero-3-phospho)-2-acyl-inositol (also termed H6) and participates in the nineth step of the glycosylphosphatidylinositol-anchor biosynthesis. May also add the third mannose to an alpha-D-Man-(1-&gt;6)-alpha-D-Man-(1-&gt;4)-alpha-D-GlcN-(1-&gt;6)-(1-radyl,2-acyl-sn-glycero-3-phospho)-2-acyl-inositol (also termed H3) intermediate generating an alpha-D-Man-(1-&gt;2)-alpha-D-Man-(1-&gt;6)-alpha-D-Man-(1-&gt;4)-alpha-D-GlcN-(1-&gt;6)-(1-radyl,2-acyl-sn-glycero-3-phospho)-2-acyl-inositol (also termed H4). The protein is GPI alpha-1,2-mannosyltransferase 3 of Homo sapiens (Human).